The primary structure comprises 1097 residues: DNA-directed RNA polymerase subunit beta (1097 aa).

Positions 1072–1097 are disordered; the sequence is QDVNPRRSTPSRPTYESLGVADYDED.

The protein belongs to the RNA polymerase beta chain family. In terms of assembly, in cyanobacteria the RNAP catalytic core is composed of 2 alpha, 1 beta, 1 beta', 1 gamma and 1 omega subunit. When a sigma factor is associated with the core the holoenzyme is formed, which can initiate transcription.

It catalyses the reaction RNA(n) + a ribonucleoside 5'-triphosphate = RNA(n+1) + diphosphate. DNA-dependent RNA polymerase catalyzes the transcription of DNA into RNA using the four ribonucleoside triphosphates as substrates. This is DNA-directed RNA polymerase subunit beta from Synechococcus sp. (strain WH7803).